Reading from the N-terminus, the 167-residue chain is Zymogen granule membrane protein 16 (167 aa).

The signal sequence occupies residues 1–16 (MLAIALLVLLCASASA). The region spanning 24–159 (SSYSGEYGGK…IDAISLHWDT (136 aa)) is the Jacalin-type lectin domain.

It belongs to the jacalin lectin family. As to expression, expressed in pancreas, colon, duodenum, and much less in stomach.

Its subcellular location is the secreted. It is found in the extracellular space. The protein resides in the extracellular matrix. It localises to the zymogen granule lumen. The protein localises to the golgi apparatus lumen. May play a role in protein trafficking. May act as a linker molecule between the submembranous matrix on the luminal side of zymogen granule membrane (ZGM) and aggregated secretory proteins during granule formation in the TGN. In Rattus norvegicus (Rat), this protein is Zymogen granule membrane protein 16 (Zg16).